The primary structure comprises 197 residues: A-kinase anchor protein 14 (197 aa).

Composition is skewed to polar residues over residues 1-11 and 19-29; these read MSETQNSTSQK and AASQTMPNTQD. Residues 1-29 are disordered; sequence MSETQNSTSQKAMDEDNKAASQTMPNTQD. Residues 35–52 are RII-binding; it reads ELTQVALALVEDVINYAV.

Binds to type II regulatory subunits (RII). In terms of tissue distribution, present in cilia (at protein level). Expressed in tissues containing axoneme-based organelles (cilia and/or flagella): trachea and testis. Highly expressed in airway cilia.

It localises to the cytoplasm. Its function is as follows. Binds to type II regulatory subunits of protein kinase A and anchors/targets them. This is A-kinase anchor protein 14 (AKAP14) from Homo sapiens (Human).